Consider the following 209-residue polypeptide: GTP cyclohydrolase 1 (209 aa).

Zn(2+)-binding residues include Cys89, His92, and Cys163.

It belongs to the GTP cyclohydrolase I family. As to quaternary structure, toroid-shaped homodecamer, composed of two pentamers of five dimers.

It carries out the reaction GTP + H2O = 7,8-dihydroneopterin 3'-triphosphate + formate + H(+). It participates in cofactor biosynthesis; 7,8-dihydroneopterin triphosphate biosynthesis; 7,8-dihydroneopterin triphosphate from GTP: step 1/1. The sequence is that of GTP cyclohydrolase 1 from Sulfolobus acidocaldarius (strain ATCC 33909 / DSM 639 / JCM 8929 / NBRC 15157 / NCIMB 11770).